Consider the following 209-residue polypeptide: Large ribosomal subunit protein uL3 (209 aa).

It belongs to the universal ribosomal protein uL3 family. In terms of assembly, part of the 50S ribosomal subunit. Forms a cluster with proteins L14 and L19.

Its function is as follows. One of the primary rRNA binding proteins, it binds directly near the 3'-end of the 23S rRNA, where it nucleates assembly of the 50S subunit. The polypeptide is Large ribosomal subunit protein uL3 (Oceanobacillus iheyensis (strain DSM 14371 / CIP 107618 / JCM 11309 / KCTC 3954 / HTE831)).